Here is a 445-residue protein sequence, read N- to C-terminus: T-box transcription factor TBX20 (445 aa).

A DNA-binding region (T-box) is located at residues 108 to 287 (LWDKFHELGT…SNPFAKGFRD (180 aa)). The segment at 318–337 (EEDVLGEESQTTQSRGSAFT) is disordered. The span at 325–337 (ESQTTQSRGSAFT) shows a compositional bias: polar residues.

Prominently expressed in the extraembryonic mesoderm, developing heart, eye analage and motor neurons of hindbrain and spinal cord. Expressed in extraembryonic tissues such as the amnion and allantois.

The protein resides in the nucleus. Functionally, acts as a transcriptional activator and repressor required for cardiac development and may have key roles in the maintenance of functional and structural phenotypes in adult heart. In Mus musculus (Mouse), this protein is T-box transcription factor TBX20 (Tbx20).